A 123-amino-acid chain; its full sequence is Thioredoxin domain-containing protein 17 (123 aa).

Ala-2 carries the post-translational modification N-acetylalanine. One can recognise a Thioredoxin domain in the interval 41-123 (SWCPDCVEAE…SLVEMIFSED (83 aa)). Catalysis depends on nucleophile residues Cys-43 and Cys-46. Cys-43 and Cys-46 form a disulfide bridge.

This sequence belongs to the thioredoxin family. Interacts with TRXR1 and DYNLL1/DNCL1. Post-translationally, the oxidized protein is reduced by TRXR1.

The protein localises to the cytoplasm. In terms of biological role, disulfide reductase. May participate in various redox reactions through the reversible oxidation of its active center dithiol to a disulfide and catalyze dithiol-disulfide exchange reactions. Modulates TNF-alpha signaling and NF-kappa-B activation. Has peroxidase activity and may contribute to the elimination of cellular hydrogen peroxide. The sequence is that of Thioredoxin domain-containing protein 17 (Txndc17) from Mus musculus (Mouse).